A 371-amino-acid polypeptide reads, in one-letter code: tRNA-specific 2-thiouridylase MnmA (371 aa).

Residues 13-20 (GMSGGVDS) and Met39 contribute to the ATP site. The interaction with target base in tRNA stretch occupies residues 99–101 (NPD). Cys104 serves as the catalytic Nucleophile. Residues Cys104 and Cys200 are joined by a disulfide bond. Gly128 is a binding site for ATP. The segment at 150–152 (KDQ) is interaction with tRNA. Catalysis depends on Cys200, which acts as the Cysteine persulfide intermediate. Residues 308–309 (RY) form an interaction with tRNA region.

The protein belongs to the MnmA/TRMU family.

It is found in the cytoplasm. It catalyses the reaction S-sulfanyl-L-cysteinyl-[protein] + uridine(34) in tRNA + AH2 + ATP = 2-thiouridine(34) in tRNA + L-cysteinyl-[protein] + A + AMP + diphosphate + H(+). In terms of biological role, catalyzes the 2-thiolation of uridine at the wobble position (U34) of tRNA, leading to the formation of s(2)U34. This Listeria welshimeri serovar 6b (strain ATCC 35897 / DSM 20650 / CCUG 15529 / CIP 8149 / NCTC 11857 / SLCC 5334 / V8) protein is tRNA-specific 2-thiouridylase MnmA.